The primary structure comprises 360 residues: Phospho-N-acetylmuramoyl-pentapeptide-transferase (360 aa).

10 helical membrane passes run 21–41, 73–93, 94–114, 132–152, 168–188, 199–219, 236–256, 263–283, 288–308, and 338–358; these read YLSF…LWMG, TMGG…WANL, SNPY…VGFV, WKYF…YAYG, VMPQ…VGTS, GLAI…AWAT, ASEL…FLWF, VFMG…IAVL, LVLV…ILQV, and VIVR…ATLK.

This sequence belongs to the glycosyltransferase 4 family. MraY subfamily. Mg(2+) is required as a cofactor.

The protein localises to the cell inner membrane. The enzyme catalyses UDP-N-acetyl-alpha-D-muramoyl-L-alanyl-gamma-D-glutamyl-meso-2,6-diaminopimeloyl-D-alanyl-D-alanine + di-trans,octa-cis-undecaprenyl phosphate = di-trans,octa-cis-undecaprenyl diphospho-N-acetyl-alpha-D-muramoyl-L-alanyl-D-glutamyl-meso-2,6-diaminopimeloyl-D-alanyl-D-alanine + UMP. It functions in the pathway cell wall biogenesis; peptidoglycan biosynthesis. Functionally, catalyzes the initial step of the lipid cycle reactions in the biosynthesis of the cell wall peptidoglycan: transfers peptidoglycan precursor phospho-MurNAc-pentapeptide from UDP-MurNAc-pentapeptide onto the lipid carrier undecaprenyl phosphate, yielding undecaprenyl-pyrophosphoryl-MurNAc-pentapeptide, known as lipid I. This is Phospho-N-acetylmuramoyl-pentapeptide-transferase from Vibrio vulnificus (strain CMCP6).